The following is a 307-amino-acid chain: Ribosomal RNA small subunit methyltransferase A (307 aa).

Residues asparagine 35, valine 37, glycine 62, glutamate 83, aspartate 113, and asparagine 136 each contribute to the S-adenosyl-L-methionine site.

The protein belongs to the class I-like SAM-binding methyltransferase superfamily. rRNA adenine N(6)-methyltransferase family. RsmA subfamily.

Its subcellular location is the cytoplasm. It carries out the reaction adenosine(1518)/adenosine(1519) in 16S rRNA + 4 S-adenosyl-L-methionine = N(6)-dimethyladenosine(1518)/N(6)-dimethyladenosine(1519) in 16S rRNA + 4 S-adenosyl-L-homocysteine + 4 H(+). Its function is as follows. Specifically dimethylates two adjacent adenosines (A1518 and A1519) in the loop of a conserved hairpin near the 3'-end of 16S rRNA in the 30S particle. May play a critical role in biogenesis of 30S subunits. The protein is Ribosomal RNA small subunit methyltransferase A of Bifidobacterium longum subsp. infantis (strain ATCC 15697 / DSM 20088 / JCM 1222 / NCTC 11817 / S12).